A 149-amino-acid chain; its full sequence is Large ribosomal subunit protein bL9 (149 aa).

The protein belongs to the bacterial ribosomal protein bL9 family.

Functionally, binds to the 23S rRNA. The protein is Large ribosomal subunit protein bL9 of Teredinibacter turnerae (strain ATCC 39867 / T7901).